A 310-amino-acid polypeptide reads, in one-letter code: Antiviral protein II/III (310 aa).

An N-terminal signal peptide occupies residues 1–25; that stretch reads MKMKVLEVVGLAISIWLMLTPPASS. Intrachain disulfides connect C57/C284 and C106/C123. The active site involves Y94. Catalysis depends on residues Y142, E197, and R200.

It belongs to the ribosome-inactivating protein family. Type 1 RIP subfamily. In terms of tissue distribution, PAP-II is expressed in early summer leaves (at protein level). PAP-III is expressed in late summer leaves (at protein level).

The catalysed reaction is Endohydrolysis of the N-glycosidic bond at one specific adenosine on the 28S rRNA.. Its function is as follows. Possesses antiviral potency. Inhibits viral infection of plants (tobacco mosaic virus). Inhibits protein synthesis in both prokaryotes and eukaryotes. This is Antiviral protein II/III (PAP2) from Phytolacca americana (American pokeweed).